Here is a 421-residue protein sequence, read N- to C-terminus: MQLLNFGLLLLPFVAGDLAPQPEPLLVGPSDIVPGQYLVTLKEGLTSAQIRDHKKWVSSVHRANLDSFAAGARGVETEGIMKHFHIHDLNMYSGGFDEKRVEDLSRSPYVKSVHPDQHFYLAKTVTQRQARWGLGYMSSKGKPVPLHSTLVDYSYDDKAGEGVWAYVLDTGINVNHVEFEGRAILGHNAIPNKSHTDEFGHGTCVAGIIAGKTYGVAKKANVVSAKAFDTGSSTYNYILETYDWIIRNITDSNRKNKAVINLSISGAKYQPFDDAAERAFKAGITTVVAAGNDGKDAKNNTPASSPNAITVGAVRWENTRPSFSNYGKIVDIWAPGELIKSCWKGGNNATSTQSGTSAASPHVAGLVAYLMSIKNLPSPSAVTARVLNLTIPNLVKDAKDSPNRVVYNGIQERKCKLPKYY.

The signal sequence occupies residues Met1–Gly16. A propeptide spanning residues Asp17–Ala122 is cleaved from the precursor. Residues Gln36–Leu121 enclose the Inhibitor I9 domain. Residues Arg131–Tyr421 form the Peptidase S8 domain. The active-site Charge relay system is Asp169. Asn192 is a glycosylation site (N-linked (GlcNAc...) asparagine). His201 functions as the Charge relay system in the catalytic mechanism. N-linked (GlcNAc...) asparagine glycans are attached at residues Asn248, Asn261, and Asn348. Ser357 functions as the Charge relay system in the catalytic mechanism. Asn388 carries N-linked (GlcNAc...) asparagine glycosylation.

Belongs to the peptidase S8 family.

The protein localises to the secreted. Secreted subtilisin-like serine protease with keratinolytic activity that contributes to pathogenicity. The sequence is that of Subtilisin-like protease 2 (SUB2) from Trichophyton rubrum (Athlete's foot fungus).